A 1641-amino-acid polypeptide reads, in one-letter code: Maestro heat-like repeat-containing protein family member 1 (1641 aa).

HEAT repeat units follow at residues 3–41 (ESSMKKLASTLLDAITDKDPLVQEQVCSALCSLGEARPV), 159–198 (VPFLPSVLSSLLPVLGVAKQDTVRVAFCSALQRFSEGALE), 344–382 (CSSPDRLLAFLLPRLDTSNERTRVGTLQVVRHVINSAAA), 385–423 (EDKKPFILSSMRLPLLDTNSKVKRAVVQVISAMAHHGYL), 1048–1086 (PDQLISLLLTMFEALGDPEKNCSRAATVMINCLLQERGG), 1358–1396 (LMLLDSLLESLAARQKDTCASVRRLVLRGLANLASGCPD), and 1605–1641 (QVDLDQLIAALQILLKDPAPEVRTRAAEALGRLVKLA).

The protein belongs to the MROH1 family. As to quaternary structure, homooligomer; homooligomerizes at lysosome scission sites.

It is found in the lysosome membrane. Functionally, lysosome fission factor. Recruited to lysosomes by RAB7 (RAB7A or RAB7B) at scission sites and homooligomerizes to mediate the constriction and scission of lysosomal tubules. May sever membranes by inserting amphipathic helices into one bilayer leaflet. Lysosome fission is required to maintain their steady-state number, shape, size, composition and function, and to accomplish regeneration. The polypeptide is Maestro heat-like repeat-containing protein family member 1 (Homo sapiens (Human)).